Here is a 130-residue protein sequence, read N- to C-terminus: MTTVLLDSHVAYWWSAEPQRLSMAASQAIEHADELAVAAISWFELAWLAEQERIQLAIPVLSWLQQLAEHVRTVGITPSVAATAVALPSSFPGDPADRLIYATAIEHGWRLVTKDRRLRSHRHPRPVTVW.

One can recognise a PINc domain in the interval 4-119 (VLLDSHVAYW…RLVTKDRRLR (116 aa)). Positions 7 and 97 each coordinate Mg(2+).

The protein belongs to the PINc/VapC protein family. Mg(2+) is required as a cofactor.

It is found in the secreted. Its function is as follows. Toxic component of a type II toxin-antitoxin (TA) system. An RNase. Upon expression in M.smegmatis inhibits translation and colony formation. Its toxic effect on colony formation is neutralized by coexpression with cognate antitoxin VapB22; the effect on translation has not been tested but is probably neutralized also. The protein is Ribonuclease VapC22 of Mycobacterium tuberculosis (strain ATCC 25618 / H37Rv).